The chain runs to 148 residues: MKVLILLGLVLLSVMVQGKVFERCELARTLKRLGLDGYRGISLANWMCLAKWESDYNTRATNYNPGDQSTDYGIFQINSHYWCNNGRTPGAVNACHISCNALLQDDITEAVACAKRVVRDPQGIRAWVAWKAHCQNRDVSQYIQGCGV.

The N-terminal stretch at 1–18 is a signal peptide; the sequence is MKVLILLGLVLLSVMVQG. Positions 19-148 constitute a C-type lysozyme domain; it reads KVFERCELAR…VSQYIQGCGV (130 aa). 4 disulfide bridges follow: Cys-24-Cys-146, Cys-48-Cys-134, Cys-83-Cys-99, and Cys-95-Cys-113. Residues Glu-53 and Asp-71 contribute to the active site.

It belongs to the glycosyl hydrolase 22 family. In terms of assembly, monomer.

It localises to the secreted. The catalysed reaction is Hydrolysis of (1-&gt;4)-beta-linkages between N-acetylmuramic acid and N-acetyl-D-glucosamine residues in a peptidoglycan and between N-acetyl-D-glucosamine residues in chitodextrins.. Lysozymes have primarily a bacteriolytic function; those in tissues and body fluids are associated with the monocyte-macrophage system and enhance the activity of immunoagents. This chain is Lysozyme C (LYZ), found in Saguinus oedipus (Cotton-top tamarin).